A 152-amino-acid polypeptide reads, in one-letter code: Phosphoribosyl-AMP cyclohydrolase (152 aa).

Asp92 contacts Mg(2+). Cys93 contributes to the Zn(2+) binding site. Residues Asp94 and Asp96 each contribute to the Mg(2+) site. Residues Cys111 and Cys118 each coordinate Zn(2+).

This sequence belongs to the PRA-CH family. In terms of assembly, homodimer. Mg(2+) is required as a cofactor. The cofactor is Zn(2+).

The protein resides in the cytoplasm. The enzyme catalyses 1-(5-phospho-beta-D-ribosyl)-5'-AMP + H2O = 1-(5-phospho-beta-D-ribosyl)-5-[(5-phospho-beta-D-ribosylamino)methylideneamino]imidazole-4-carboxamide. It functions in the pathway amino-acid biosynthesis; L-histidine biosynthesis; L-histidine from 5-phospho-alpha-D-ribose 1-diphosphate: step 3/9. Catalyzes the hydrolysis of the adenine ring of phosphoribosyl-AMP. The protein is Phosphoribosyl-AMP cyclohydrolase of Sinorhizobium fredii (strain NBRC 101917 / NGR234).